The sequence spans 221 residues: NEP1-interacting protein-like 1 (221 aa).

3 helical membrane passes run 35-55 (LFTF…GALI), 69-89 (VGAI…LLLW), and 95-115 (GIGC…GRLV). The RING-type; atypical zinc finger occupies 176–218 (CSVCLQDFQVGETVRSLPHCHHMFHLPCIDKWLRRHASCPLCR).

This sequence belongs to the RING-type zinc finger family. NIP subfamily.

The protein resides in the membrane. Its function is as follows. May be involved in the early steps of the plant defense signaling pathway. The chain is NEP1-interacting protein-like 1 (ATL27) from Arabidopsis thaliana (Mouse-ear cress).